Consider the following 258-residue polypeptide: MSPAIALAFLPLVVTLLVRYRHHFRLLVRTVLLRGFRDCLSGLRIEERAFSYVLTHALPGDPGHILTTLDHWSSCCEYLSHMGPVKGQILMRLVEEKAPACVLELGTYCGYSTLLIARALPPGSRLLTVERDSRTAAVAEKVIRLAGFDEQMVELIAGSSEEVIPRLRAQHQLNRADLVLLAHRPRYYLRDLQLLEAHALLPHGATVLADHVLFPGAPRFLQYTKSCGRYRCRLHHTSLPDFPAIKDGIAQLTYTGPG.

S-adenosyl-L-methionine contacts are provided by residues Glu104, 106–107, Ser112, Glu130, and Ser160; that span reads GT.

The protein belongs to the class I-like SAM-binding methyltransferase superfamily. Cation-dependent O-methyltransferase family. In terms of assembly, interacts with LHFPL5, PCDH15, TMC1, TMC2 and TMIE. The interaction of TOMT with TMC1 and TMC2 is required for the transportation of TMC1/2 into the stereocilia of hair cells. Interacts directly with TMC1. Widely expressed with high levels in outer and inner hair cells of the cochlea and vestibule.

The protein resides in the cytoplasm. It localises to the endoplasmic reticulum. The enzyme catalyses a catechol + S-adenosyl-L-methionine = a guaiacol + S-adenosyl-L-homocysteine + H(+). Catalyzes the O-methylation, and thereby the inactivation, of catecholamine neurotransmitters and catechol hormones. Required for auditory function. Component of the cochlear hair cell's mechanotransduction (MET) machinery. Involved in the assembly of the asymmetric tip-link MET complex. Required for transportation of TMC1 and TMC2 proteins into the mechanically sensitive stereocilia of the hair cells. The function in MET is independent of the enzymatic activity. The sequence is that of Transmembrane O-methyltransferase homolog from Mus musculus (Mouse).